The primary structure comprises 163 residues: Urease accessory protein UreE (163 aa).

Positions glutamine 144–histidine 163 are disordered.

It belongs to the UreE family.

It is found in the cytoplasm. Involved in urease metallocenter assembly. Binds nickel. Probably functions as a nickel donor during metallocenter assembly. The polypeptide is Urease accessory protein UreE (Aliivibrio fischeri (strain MJ11) (Vibrio fischeri)).